A 725-amino-acid polypeptide reads, in one-letter code: IML2-like protein YKR018C (725 aa).

Phosphothreonine is present on T196. 3 positions are modified to phosphoserine: S246, S377, and S380.

This sequence belongs to the IML2 family.

The protein localises to the cytoplasm. Its subcellular location is the nucleus. In Saccharomyces cerevisiae (strain ATCC 204508 / S288c) (Baker's yeast), this protein is IML2-like protein YKR018C.